We begin with the raw amino-acid sequence, 346 residues long: Queuosine 5'-phosphate N-glycosylase/hydrolase (346 aa).

Residues His49, Phe243, Asp245, Asp310, and Asp315 each coordinate queuine. Asp245 serves as the catalytic Nucleophile or transition state stabilizer.

This sequence belongs to the QNG1 protein family.

The enzyme catalyses queuosine 5'-phosphate + H2O = queuine + D-ribose 5-phosphate. In terms of biological role, catalyzes the hydrolysis of queuosine 5'-phosphate, releasing the nucleobase queuine (q). Is required for salvage of queuine from exogenous queuosine (Q) that is imported and then converted to queuosine 5'-phosphate intracellularly. This is Queuosine 5'-phosphate N-glycosylase/hydrolase from Schizosaccharomyces pombe (strain 972 / ATCC 24843) (Fission yeast).